We begin with the raw amino-acid sequence, 195 residues long: Keratin-associated protein 4-11 (195 aa).

A run of 27 repeats spans residues 5–9 (CCGSV), 24–28 (CCRPS), 29–33 (CCETT), 34–38 (CCRTT), 44–48 (CCVSS), 49–53 (CCRPQ), 54–58 (CCQSV), 59–63 (CCQPT), 64–68 (CCRPR), 69–73 (CCISS), 74–78 (CCRPS), 79–83 (CCVSS), 84–88 (CCKPQ), 89–93 (CCQSM), 94–98 (CCQPT), 99–103 (CCRPR), 104–108 (CCISS), 109–113 (CCRPS), 114–118 (CCVSS), 119–123 (CCRPQ), 124–128 (CCQSV), 129–133 (CCQPT), 134–138 (CCHPS), 144–148 (CCRPS), 149–153 (CCESS), 154–158 (CCRPC), and 159–163 (CCLRP). A 27 X 5 AA repeats of C-C-[GIKRQVHEL]-[SPTR]-[STVQRMC] region spans residues 5 to 163 (CCGSVCSHQG…CCRPCCCLRP (159 aa)).

The protein belongs to the KRTAP type 4 family. In terms of assembly, interacts with hair keratins. As to expression, expressed in the hair follicles.

In the hair cortex, hair keratin intermediate filaments are embedded in an interfilamentous matrix, consisting of hair keratin-associated proteins (KRTAP), which are essential for the formation of a rigid and resistant hair shaft through their extensive disulfide bond cross-linking with abundant cysteine residues of hair keratins. The matrix proteins include the high-sulfur and high-glycine-tyrosine keratins. The polypeptide is Keratin-associated protein 4-11 (KRTAP4-11) (Homo sapiens (Human)).